We begin with the raw amino-acid sequence, 298 residues long: Glycine--tRNA ligase alpha subunit (298 aa).

Belongs to the class-II aminoacyl-tRNA synthetase family. As to quaternary structure, tetramer of two alpha and two beta subunits.

The protein resides in the cytoplasm. It catalyses the reaction tRNA(Gly) + glycine + ATP = glycyl-tRNA(Gly) + AMP + diphosphate. The sequence is that of Glycine--tRNA ligase alpha subunit from Helicobacter pylori (strain P12).